A 248-amino-acid polypeptide reads, in one-letter code: PF03932 family protein CutC (248 aa).

It belongs to the CutC family. As to quaternary structure, homodimer.

The protein localises to the cytoplasm. This is PF03932 family protein CutC from Escherichia coli O157:H7.